The sequence spans 602 residues: Arp2/3 complex-activating protein rickA (602 aa).

3 disordered regions span residues 307 to 484 (SSLA…AGPK), 516 to 535 (VEFDPNTGKPVAHSHSKPVQ), and 555 to 602 (MSDS…SFVK). Over residues 318 to 442 (TPPPPLPGNN…IPPPPPPPMA (125 aa)) the composition is skewed to pro residues. 2 WH2 domains span residues 472–489 (DTSDLMREIAGPKKLRKV) and 499–516 (SRDLLLQSIRGEHKLKKV). The segment covering 475 to 484 (DLMREIAGPK) has biased composition (basic and acidic residues). The interval 537-570 (VNKLSGVASILARRVVMEMSDSSGSESDSGNWSD) is central and acidic domains. Low complexity predominate over residues 555-566 (MSDSSGSESDSG). The segment covering 578–590 (KTLKTKRERRKIL) has biased composition (basic residues). Residues 591-602 (NNRNSQKPSFVK) show a composition bias toward polar residues.

Homodimer.

Its subcellular location is the cell surface. Its function is as follows. Recruits and activates the Arp2/3 complex, which in turn leads to actin polymerization, promoting Rickettsia motility during infection. This chain is Arp2/3 complex-activating protein rickA (rickA), found in Rickettsia montanensis.